The primary structure comprises 108 residues: Large ribosomal subunit protein bL21c (108 aa).

This sequence belongs to the bacterial ribosomal protein bL21 family. As to quaternary structure, part of the 50S ribosomal subunit.

The protein resides in the plastid. It is found in the chloroplast. This protein binds to 23S rRNA. The sequence is that of Large ribosomal subunit protein bL21c from Cyanidium caldarium (Red alga).